The sequence spans 678 residues: Glutamate--cysteine ligase (678 aa).

The protein belongs to the glutamate--cysteine ligase type 3 family.

It catalyses the reaction L-cysteine + L-glutamate + ATP = gamma-L-glutamyl-L-cysteine + ADP + phosphate + H(+). It functions in the pathway sulfur metabolism; glutathione biosynthesis; glutathione from L-cysteine and L-glutamate: step 1/2. Its activity is regulated as follows. Feedback inhibition by glutathione. Catalyzes the ATP-dependent condensation of cysteine and glutamate to form the dipeptide gamma-glutamylcysteine (gamma-GC), the first and rate-limiting step in the production of glutathione (GSH). This is Glutamate--cysteine ligase (GSH1) from Saccharomyces cerevisiae (strain ATCC 204508 / S288c) (Baker's yeast).